A 237-amino-acid polypeptide reads, in one-letter code: Ras-related protein Rab-23 (237 aa).

Position 19 (Ala-19) interacts with GDP. GTP-binding residues include Val-20, Gly-21, Lys-22, Ser-23, and Ser-24. Gly-21, Lys-22, Ser-23, Ser-24, and Asp-37 together coordinate GDP. Position 23 (Ser-23) interacts with Mg(2+). The short motif at Arg-28–Phe-46 is the Switch 1 element. GTP is bound at residue Tyr-38. A GDP-binding site is contributed by Lys-40. Thr-41 contacts GTP. Residues Thr-41 and Asp-64 each coordinate Mg(2+). The Switch 2 motif lies at Thr-65–Ala-84. Positions 67, 121, 122, 124, 151, 152, and 153 each coordinate GTP. 3 residues coordinate GDP: Asn-121, Lys-122, and Asp-124. Positions 152 and 153 each coordinate GDP. Residues Ser-186 and Ser-187 each carry the phosphoserine modification. Residues Gln-204–Pro-237 form a disordered region. Position 234 is a cysteine methyl ester (Cys-234). Residue Cys-234 is the site of S-geranylgeranyl cysteine attachment. Residues Ser-235–Pro-237 constitute a propeptide, removed in mature form.

Belongs to the small GTPase superfamily. Rab family. Interacts with SUFU. Requires Mg(2+) as cofactor. As to expression, detected in brain neurons (at protein level). Forebrain and midbrain.

The protein localises to the cell membrane. It localises to the cytoplasm. The protein resides in the endosome membrane. It is found in the cytoplasmic vesicle. Its subcellular location is the autophagosome. The protein localises to the phagosome. It localises to the phagosome membrane. The enzyme catalyses GTP + H2O = GDP + phosphate + H(+). With respect to regulation, regulated by guanine nucleotide exchange factors (GEFs) which promote the exchange of bound GDP for free GTP. Regulated by GTPase activating proteins (GAPs) which increase the GTP hydrolysis activity. Inhibited by GDP dissociation inhibitors (GDIs). The small GTPases Rab are key regulators of intracellular membrane trafficking, from the formation of transport vesicles to their fusion with membranes. Rabs cycle between an inactive GDP-bound form and an active GTP-bound form that is able to recruit to membranes different set of downstream effectors directly responsible for vesicle formation, movement, tethering and fusion. Plays a role in autophagic vacuole assembly, and mediates defense against pathogens, such as S.aureus, by promoting their capture by autophagosomes that then merge with lysosomes. Together with SUFU, prevents nuclear import of GLI1, and thereby inhibits GLI1 transcription factor activity. Regulates GLI1 in differentiating chondrocytes. Likewise, regulates GLI3 proteolytic processing and modulates GLI2 and GLI3 transcription factor activity. The chain is Ras-related protein Rab-23 from Mus musculus (Mouse).